The sequence spans 150 residues: Macrodomain Ter protein (150 aa).

Belongs to the MatP family. As to quaternary structure, homodimer.

It is found in the cytoplasm. Required for spatial organization of the terminus region of the chromosome (Ter macrodomain) during the cell cycle. Prevents early segregation of duplicated Ter macrodomains during cell division. Binds specifically to matS, which is a 13 bp signature motif repeated within the Ter macrodomain. This chain is Macrodomain Ter protein, found in Erwinia tasmaniensis (strain DSM 17950 / CFBP 7177 / CIP 109463 / NCPPB 4357 / Et1/99).